A 317-amino-acid polypeptide reads, in one-letter code: Melanocyte-stimulating hormone receptor (317 aa).

Topologically, residues 1–37 (MPVQGSQRRLLGSLNSTPTATPHLGLAANQTGARCLE) are extracellular. Asn29 carries N-linked (GlcNAc...) asparagine glycosylation. The chain crosses the membrane as a helical span at residues 38-63 (VSIPDGLFLSLGLVSLVENVLVVTAI). Topologically, residues 64–72 (AKNRNLHSP) are cytoplasmic. A helical membrane pass occupies residues 73–93 (MYCFICCLALSDLLVSGSNML). Topologically, residues 94-118 (ETAVILLLEAGALAARAAVVQQLDN) are extracellular. Residues 119–140 (VIDVITCSSMLASLCFLGAIAV) form a helical membrane-spanning segment. At 141–163 (DRYISIFYALRYHSIVTLPRARR) the chain is on the cytoplasmic side. A helical membrane pass occupies residues 164 to 183 (AVAAIWVASVLFSMLFIAYY). The Extracellular portion of the chain corresponds to 184-191 (DHAAVLLC). A helical membrane pass occupies residues 192–211 (LVVFFLAMLVLMAVLYIHML). At 212–240 (ARARQHAQGIARLHKRQCPAHQGFGLKGA) the chain is on the cytoplasmic side. The chain crosses the membrane as a helical span at residues 241–266 (ATLTILLGIFFLCWGPFFLHLTLIVL). Topologically, residues 267–279 (CPQHPTCSCIFKN) are extracellular. The helical transmembrane segment at 280–300 (FNLFLALIICNAIIDPLIYAF) threads the bilayer. Over 301 to 317 (RSQELRRTLKEVLLCSW) the chain is Cytoplasmic. Cys315 carries S-palmitoyl cysteine lipidation.

It belongs to the G-protein coupled receptor 1 family. Interacts with MGRN1, but does not undergo MGRN1-mediated ubiquitination; this interaction competes with GNAS-binding and thus inhibits agonist-induced cAMP production. Interacts with OPN3; the interaction results in a decrease in MC1R-mediated cAMP signaling and ultimately a decrease in melanin production in melanocytes.

The protein localises to the cell membrane. Functionally, receptor for MSH (alpha, beta and gamma) and ACTH. The activity of this receptor is mediated by G proteins which activate adenylate cyclase. Mediates melanogenesis, the production of eumelanin (black/brown) and phaeomelanin (red/yellow), via regulation of cAMP signaling in melanocytes. This chain is Melanocyte-stimulating hormone receptor (MC1R), found in Cercopithecus mitis (Blue monkey).